The following is a 176-amino-acid chain: Methylated-DNA--protein-cysteine methyltransferase (176 aa).

Residue cysteine 142 is the Nucleophile; methyl group acceptor of the active site.

This sequence belongs to the MGMT family.

Its subcellular location is the cytoplasm. It carries out the reaction a 6-O-methyl-2'-deoxyguanosine in DNA + L-cysteinyl-[protein] = S-methyl-L-cysteinyl-[protein] + a 2'-deoxyguanosine in DNA. It catalyses the reaction a 4-O-methyl-thymidine in DNA + L-cysteinyl-[protein] = a thymidine in DNA + S-methyl-L-cysteinyl-[protein]. Functionally, involved in the cellular defense against the biological effects of O6-methylguanine (O6-MeG) and O4-methylthymine (O4-MeT) in DNA. Repairs the methylated nucleobase in DNA by stoichiometrically transferring the methyl group to a cysteine residue in the enzyme. This is a suicide reaction: the enzyme is irreversibly inactivated. This is Methylated-DNA--protein-cysteine methyltransferase from Methanothermobacter thermautotrophicus (strain ATCC 29096 / DSM 1053 / JCM 10044 / NBRC 100330 / Delta H) (Methanobacterium thermoautotrophicum).